Consider the following 339-residue polypeptide: Glycerol-3-phosphate dehydrogenase [NAD(P)+] (339 aa).

Residues Ser-15, Tyr-16, His-36, and Lys-110 each coordinate NADPH. Sn-glycerol 3-phosphate contacts are provided by Lys-110, Gly-139, and Thr-141. Position 143 (Ala-143) interacts with NADPH. Residues Lys-195, Asp-248, Ser-258, Arg-259, and Asn-260 each contribute to the sn-glycerol 3-phosphate site. Residue Lys-195 is the Proton acceptor of the active site. Residue Arg-259 participates in NADPH binding. Residues Val-283 and Glu-285 each contribute to the NADPH site.

Belongs to the NAD-dependent glycerol-3-phosphate dehydrogenase family.

It localises to the cytoplasm. It catalyses the reaction sn-glycerol 3-phosphate + NAD(+) = dihydroxyacetone phosphate + NADH + H(+). The enzyme catalyses sn-glycerol 3-phosphate + NADP(+) = dihydroxyacetone phosphate + NADPH + H(+). It participates in membrane lipid metabolism; glycerophospholipid metabolism. Catalyzes the reduction of the glycolytic intermediate dihydroxyacetone phosphate (DHAP) to sn-glycerol 3-phosphate (G3P), the key precursor for phospholipid synthesis. In Salmonella agona (strain SL483), this protein is Glycerol-3-phosphate dehydrogenase [NAD(P)+].